A 488-amino-acid polypeptide reads, in one-letter code: Glutamyl-tRNA(Gln) amidotransferase subunit A (488 aa).

Catalysis depends on charge relay system residues lysine 77 and serine 152. Serine 176 serves as the catalytic Acyl-ester intermediate.

Belongs to the amidase family. GatA subfamily. Heterotrimer of A, B and C subunits.

It catalyses the reaction L-glutamyl-tRNA(Gln) + L-glutamine + ATP + H2O = L-glutaminyl-tRNA(Gln) + L-glutamate + ADP + phosphate + H(+). Functionally, allows the formation of correctly charged Gln-tRNA(Gln) through the transamidation of misacylated Glu-tRNA(Gln) in organisms which lack glutaminyl-tRNA synthetase. The reaction takes place in the presence of glutamine and ATP through an activated gamma-phospho-Glu-tRNA(Gln). This is Glutamyl-tRNA(Gln) amidotransferase subunit A from Streptococcus pyogenes serotype M4 (strain MGAS10750).